A 699-amino-acid polypeptide reads, in one-letter code: Elongation factor G (699 aa).

Residues 10–292 (DRTRNIGIMA…AVIDYLPSPT (283 aa)) form the tr-type G domain. GTP contacts are provided by residues 19–26 (AHIDAGKT), 90–94 (DTPGH), and 144–147 (NKMD).

It belongs to the TRAFAC class translation factor GTPase superfamily. Classic translation factor GTPase family. EF-G/EF-2 subfamily.

It localises to the cytoplasm. Catalyzes the GTP-dependent ribosomal translocation step during translation elongation. During this step, the ribosome changes from the pre-translocational (PRE) to the post-translocational (POST) state as the newly formed A-site-bound peptidyl-tRNA and P-site-bound deacylated tRNA move to the P and E sites, respectively. Catalyzes the coordinated movement of the two tRNA molecules, the mRNA and conformational changes in the ribosome. In Coxiella burnetii (strain Dugway 5J108-111), this protein is Elongation factor G.